The sequence spans 368 residues: Endophilin-A2 (368 aa).

The membrane-binding amphipathic helix stretch occupies residues 1-21; the sequence is MSVAGLKKQFYKASQLVSEKV. A BAR domain is found at 18 to 249; it reads SEKVGGAEGT…LKRRMREASS (232 aa). The interval 60–87 is required for dimerization upon membrane association; that stretch reads PNPASRAKLTMLNTVSKIRGQVKNPGYP. Positions 145–250 form a coiled coil; that stretch reads NLCEKDLKEI…KRRMREASSR (106 aa). Residues 218–254 form an interaction with ARC region; the sequence is LVDAQLDYHRQAVQILDELAEKLKRRMREASSRPKRE. Residues 244–308 form a disordered region; sequence MREASSRPKR…PSRSMPPLDQ (65 aa). The span at 245–263 shows a compositional bias: basic and acidic residues; that stretch reads REASSRPKREYKPKPREPF. Ser288 and Ser292 each carry phosphoserine. A Phosphothreonine modification is found at Thr298. The region spanning 306–365 is the SH3 domain; the sequence is LDQPSCKALYDFEPENDGELGFHEGDVITLTNQIDENWYEGMLDGQSGFFPLSYVEVLVP. The residue at position 315 (Tyr315) is a Phosphotyrosine.

Belongs to the endophilin family. In terms of assembly, interacts with ARC. Interacts with SYNJ1 and DNM1. Interacts with PDCD6IP. Interacts with BIN2. Ubiquitous. Higher expression in pancreas, placenta, prostate, testis and uterus.

Its subcellular location is the cytoplasm. It localises to the early endosome membrane. It is found in the cell projection. The protein localises to the podosome. In terms of biological role, implicated in endocytosis. May recruit other proteins to membranes with high curvature. This is Endophilin-A2 (SH3GL1) from Homo sapiens (Human).